We begin with the raw amino-acid sequence, 310 residues long: Ribonuclease Z (310 aa).

Residues histidine 64, histidine 66, aspartate 68, histidine 69, histidine 146, aspartate 215, and histidine 273 each contribute to the Zn(2+) site. Catalysis depends on aspartate 68, which acts as the Proton acceptor.

The protein belongs to the RNase Z family. Homodimer. Requires Zn(2+) as cofactor.

The catalysed reaction is Endonucleolytic cleavage of RNA, removing extra 3' nucleotides from tRNA precursor, generating 3' termini of tRNAs. A 3'-hydroxy group is left at the tRNA terminus and a 5'-phosphoryl group is left at the trailer molecule.. Functionally, zinc phosphodiesterase, which displays some tRNA 3'-processing endonuclease activity. Probably involved in tRNA maturation, by removing a 3'-trailer from precursor tRNA. This is Ribonuclease Z from Aeropyrum pernix (strain ATCC 700893 / DSM 11879 / JCM 9820 / NBRC 100138 / K1).